The primary structure comprises 235 residues: Sugar fermentation stimulation protein homolog (235 aa).

This sequence belongs to the SfsA family.

This chain is Sugar fermentation stimulation protein homolog, found in Azotobacter vinelandii (strain DJ / ATCC BAA-1303).